We begin with the raw amino-acid sequence, 329 residues long: DNA-directed RNA polymerase subunit alpha (329 aa).

The alpha N-terminal domain (alpha-NTD) stretch occupies residues 1–235; the sequence is MQGSVTEFLK…EQLEAFVDLR (235 aa). An alpha C-terminal domain (alpha-CTD) region spans residues 249–329; the sequence is FDPILLRPVD…NWPPASIADE (81 aa).

Belongs to the RNA polymerase alpha chain family. In terms of assembly, homodimer. The RNAP catalytic core consists of 2 alpha, 1 beta, 1 beta' and 1 omega subunit. When a sigma factor is associated with the core the holoenzyme is formed, which can initiate transcription.

The enzyme catalyses RNA(n) + a ribonucleoside 5'-triphosphate = RNA(n+1) + diphosphate. DNA-dependent RNA polymerase catalyzes the transcription of DNA into RNA using the four ribonucleoside triphosphates as substrates. In Enterobacter sp. (strain 638), this protein is DNA-directed RNA polymerase subunit alpha.